The following is a 136-amino-acid chain: MARTKQTARKSTGGKAPRKQLVTKAARKSAPSTGGMKKPHRYRPGTVALREIRRHQKSTELLIRKLPFQRLVREIAQDFKTDLRFQSAAIGALQEASEAYLVGLFEDTNLCAIHAKRVTVMPRDIQLARRIRGERA.

The disordered stretch occupies residues Met-1–Pro-44. Arg-3 is subject to Asymmetric dimethylarginine; by PRMT6; alternate. At Arg-3 the chain carries Citrulline; alternate. Thr-4 is modified (phosphothreonine; by HASPIN). Allysine; alternate is present on Lys-5. Residue Lys-5 is modified to N6,N6,N6-trimethyllysine; alternate. Lys-5 is subject to N6,N6-dimethyllysine; alternate. An N6-(2-hydroxyisobutyryl)lysine; alternate modification is found at Lys-5. The residue at position 5 (Lys-5) is an N6-(beta-hydroxybutyryl)lysine; alternate. Lys-5 is subject to N6-acetyllysine; alternate. At Lys-5 the chain carries N6-methyllysine; alternate. The residue at position 6 (Gln-6) is a 5-glutamyl dopamine; alternate. At Gln-6 the chain carries 5-glutamyl serotonin; alternate. A Phosphothreonine; by PKC modification is found at Thr-7. Arg-9 is modified (symmetric dimethylarginine). Residue Lys-10 is modified to N6,N6,N6-trimethyllysine; alternate. N6,N6-dimethyllysine; alternate is present on Lys-10. Lys-10 bears the N6-(2-hydroxyisobutyryl)lysine; alternate mark. Lys-10 bears the N6-(beta-hydroxybutyryl)lysine; alternate mark. Lys-10 is modified (N6-acetyllysine; alternate). Lys-10 carries the post-translational modification N6-methyllysine; alternate. Lys-10 carries the post-translational modification N6-lactoyllysine; alternate. An ADP-ribosylserine; alternate modification is found at Ser-11. Ser-11 carries the phosphoserine; alternate; by AURKB, AURKC, RPS6KA3, RPS6KA4 and RPS6KA5 modification. A Phosphothreonine; by PKC modification is found at Thr-12. At Lys-15 the chain carries N6-(2-hydroxyisobutyryl)lysine; alternate. Position 15 is an N6-(beta-hydroxybutyryl)lysine; alternate (Lys-15). N6-acetyllysine; alternate is present on Lys-15. An N6-lactoyllysine; alternate modification is found at Lys-15. The residue at position 15 (Lys-15) is an N6-glutaryllysine; alternate. Lys-15 carries the post-translational modification N6-succinyllysine; alternate. Asymmetric dimethylarginine is present on Arg-18. N6-(2-hydroxyisobutyryl)lysine; alternate is present on residues Lys-19 and Lys-24. An N6-(beta-hydroxybutyryl)lysine; alternate mark is found at Lys-19 and Lys-24. N6-acetyllysine; alternate occurs at positions 19 and 24. 2 positions are modified to N6-methyllysine; alternate: Lys-19 and Lys-24. Lys-19 and Lys-24 each carry N6-lactoyllysine; alternate. Residues Lys-19 and Lys-24 each carry the N6-glutaryllysine; alternate modification. N6-butyryllysine; alternate is present on residues Lys-19 and Lys-24. A Citrulline modification is found at Arg-27. The residue at position 28 (Lys-28) is an N6,N6,N6-trimethyllysine; alternate. Lys-28 bears the N6,N6-dimethyllysine; alternate mark. Lys-28 carries the N6-(2-hydroxyisobutyryl)lysine; alternate modification. Position 28 is an N6-acetyllysine; alternate (Lys-28). Lys-28 is subject to N6-methyllysine; alternate. Lys-28 carries the N6-lactoyllysine; alternate modification. Lys-28 carries the N6-glutaryllysine; alternate modification. At Ser-29 the chain carries ADP-ribosylserine; alternate. At Ser-29 the chain carries Phosphoserine; alternate; by AURKB, AURKC and RPS6KA5. Residue Ser-32 is modified to Phosphoserine. Lys-37 is modified (N6,N6,N6-trimethyllysine; alternate). At Lys-37 the chain carries N6,N6-dimethyllysine; alternate. The residue at position 37 (Lys-37) is an N6-(2-hydroxyisobutyryl)lysine; alternate. Residue Lys-37 is modified to N6-acetyllysine; alternate. Lys-37 is modified (N6-methyllysine; alternate). The residue at position 38 (Lys-38) is an N6-methyllysine. Residue Tyr-42 is modified to Phosphotyrosine. Lys-57 is modified (N6,N6,N6-trimethyllysine; alternate). Lys-57 is modified (N6-(2-hydroxyisobutyryl)lysine; alternate). Lys-57 carries the post-translational modification N6-(beta-hydroxybutyryl)lysine; alternate. Position 57 is an N6-acetyllysine; alternate (Lys-57). Lys-57 is subject to N6-methyllysine; alternate. Lys-57 carries the N6-lactoyllysine; alternate modification. Lys-57 bears the N6-glutaryllysine; alternate mark. An N6-succinyllysine; alternate modification is found at Lys-57. Residue Ser-58 is modified to Phosphoserine. Lys-65 and Lys-80 each carry N6-(2-hydroxyisobutyryl)lysine; alternate. Residues Lys-65 and Lys-80 each carry the N6-methyllysine; alternate modification. At Lys-80 the chain carries N6,N6,N6-trimethyllysine; alternate. The residue at position 80 (Lys-80) is an N6,N6-dimethyllysine; alternate. An N6-acetyllysine; alternate modification is found at Lys-80. Lys-80 carries the post-translational modification N6-lactoyllysine; alternate. N6-glutaryllysine; alternate is present on Lys-80. Position 80 is an N6-succinyllysine; alternate (Lys-80). Residue Thr-81 is modified to Phosphothreonine. Position 87 is a phosphoserine (Ser-87). Thr-108 is subject to Phosphothreonine. Lys-116 carries the N6-acetyllysine; alternate modification. At Lys-116 the chain carries N6-glutaryllysine; alternate.

This sequence belongs to the histone H3 family. As to quaternary structure, the nucleosome is a histone octamer containing two molecules each of H2A, H2B, H3 and H4 assembled in one H3-H4 heterotetramer and two H2A-H2B heterodimers. The octamer wraps approximately 147 bp of DNA. In terms of processing, acetylation is generally linked to gene activation. Acetylation on Lys-19 (H3K18ac) favors methylation at Arg-18 (H3R17me). Citrullination at Arg-18 by PADI4 impairs methylation and represses transcription. Post-translationally, asymmetric dimethylation at Arg-18 (H3R17me2a) by CARM1 is linked to gene activation. Asymmetric dimethylation at Arg-3 (H3R2me2a) by PRMT6 is linked to gene repression and is mutually exclusive with H3 Lys-5 methylation (H3K4me2 and H3K4me3). H3R2me2a is present at the 3' of genes regardless of their transcription state and is enriched on inactive promoters, while it is absent on active promoters. In terms of processing, methylation at Lys-5 (H3K4me) and Lys-80 (H3K79me) are linked to gene activation. Methylation at Lys-5 (H3K4me) facilitates subsequent acetylation of H3 and H4. Methylation at Lys-80 (H3K79me) is associated with DNA double-strand break (DSB) responses and is a specific target for TP53BP1. Methylation at Lys-10 (H3K9me) and Lys-28 (H3K27me) are linked to gene repression. Methylation at Lys-10 (H3K9me) is a specific target for HP1 proteins (CBX1, CBX3 and CBX5) and prevents subsequent phosphorylation at Ser-11 (H3S10ph) and acetylation of H3 and H4. Methylation at Lys-5 (H3K4me) and Lys-80 (H3K79me) require preliminary monoubiquitination of H2B at 'Lys-120'. Methylation at Lys-10 (H3K9me) and Lys-28 (H3K27me) are enriched in inactive X chromosome chromatin. Monomethylation at Lys-57 (H3K56me1) by EHMT2/G9A in G1 phase promotes interaction with PCNA and is required for DNA replication. Phosphorylated at Thr-4 (H3T3ph) by HASPIN during prophase and dephosphorylated during anaphase. Phosphorylation at Ser-11 (H3S10ph) by AURKB is crucial for chromosome condensation and cell-cycle progression during mitosis and meiosis. In addition phosphorylation at Ser-11 (H3S10ph) by RPS6KA4 and RPS6KA5 is important during interphase because it enables the transcription of genes following external stimulation, like mitogens, stress, growth factors or UV irradiation and result in the activation of genes, such as c-fos and c-jun. Phosphorylation at Ser-11 (H3S10ph), which is linked to gene activation, prevents methylation at Lys-10 (H3K9me) but facilitates acetylation of H3 and H4. Phosphorylation at Ser-11 (H3S10ph) by AURKB mediates the dissociation of HP1 proteins (CBX1, CBX3 and CBX5) from heterochromatin. Phosphorylation at Ser-11 (H3S10ph) is also an essential regulatory mechanism for neoplastic cell transformation. Phosphorylated at Ser-29 (H3S28ph) by MAP3K20 isoform 1, RPS6KA5 or AURKB during mitosis or upon ultraviolet B irradiation. Phosphorylation at Thr-7 (H3T6ph) by PRKCB is a specific tag for epigenetic transcriptional activation that prevents demethylation of Lys-5 (H3K4me) by LSD1/KDM1A. At centromeres, specifically phosphorylated at Thr-12 (H3T11ph) from prophase to early anaphase, by DAPK3 and PKN1. Phosphorylation at Thr-12 (H3T11ph) by PKN1 or isoform M2 of PKM (PKM2) is a specific tag for epigenetic transcriptional activation that promotes demethylation of Lys-10 (H3K9me) by KDM4C/JMJD2C. Phosphorylation at Tyr-42 (H3Y41ph) by JAK2 promotes exclusion of CBX5 (HP1 alpha) from chromatin. Post-translationally, lysine deamination at Lys-5 (H3K4all) to form allysine is mediated by LOXL2. Allysine formation by LOXL2 only takes place on H3K4me3 and results in gene repression. In terms of processing, butyrylation of histones marks active promoters and competes with histone acetylation. It is present during late spermatogenesis. Succinylation at Lys-80 (H3K79succ) by KAT2A takes place with a maximum frequency around the transcription start sites of genes. It gives a specific tag for epigenetic transcription activation. Post-translationally, serine ADP-ribosylation constitutes the primary form of ADP-ribosylation of proteins in response to DNA damage. Serine ADP-ribosylation at Ser-11 (H3S10ADPr) is mutually exclusive with phosphorylation at Ser-11 (H3S10ph) and impairs acetylation at Lys-10 (H3K9ac).

The protein localises to the nucleus. It localises to the chromosome. Functionally, core component of nucleosome. Nucleosomes wrap and compact DNA into chromatin, limiting DNA accessibility to the cellular machineries which require DNA as a template. Histones thereby play a central role in transcription regulation, DNA repair, DNA replication and chromosomal stability. DNA accessibility is regulated via a complex set of post-translational modifications of histones, also called histone code, and nucleosome remodeling. The polypeptide is Histone H3.3C (Bos taurus (Bovine)).